Consider the following 325-residue polypeptide: GMP reductase (325 aa).

The Thioimidate intermediate role is filled by Cys174. Position 203 to 226 (203 to 226 (IIADGGIRTHGDIAKSVRFGATMV)) interacts with NADP(+).

It belongs to the IMPDH/GMPR family. GuaC type 2 subfamily.

It catalyses the reaction IMP + NH4(+) + NADP(+) = GMP + NADPH + 2 H(+). In terms of biological role, catalyzes the irreversible NADPH-dependent deamination of GMP to IMP. It functions in the conversion of nucleobase, nucleoside and nucleotide derivatives of G to A nucleotides, and in maintaining the intracellular balance of A and G nucleotides. The chain is GMP reductase from Enterococcus faecalis (strain ATCC 700802 / V583).